Consider the following 100-residue polypeptide: NADH-quinone oxidoreductase subunit K (100 aa).

The next 3 membrane-spanning stretches (helical) occupy residues 1–21 (MIGL…GLAG), 28–48 (ILLL…GFVA), and 64–84 (FIIA…ILWF).

Belongs to the complex I subunit 4L family. NDH-1 is composed of 14 different subunits. Subunits NuoA, H, J, K, L, M, N constitute the membrane sector of the complex.

Its subcellular location is the cell inner membrane. It catalyses the reaction a quinone + NADH + 5 H(+)(in) = a quinol + NAD(+) + 4 H(+)(out). Its function is as follows. NDH-1 shuttles electrons from NADH, via FMN and iron-sulfur (Fe-S) centers, to quinones in the respiratory chain. The immediate electron acceptor for the enzyme in this species is believed to be ubiquinone. Couples the redox reaction to proton translocation (for every two electrons transferred, four hydrogen ions are translocated across the cytoplasmic membrane), and thus conserves the redox energy in a proton gradient. The protein is NADH-quinone oxidoreductase subunit K of Helicobacter pylori (strain P12).